Here is a 434-residue protein sequence, read N- to C-terminus: MKFSAYLTTLFIVLFSLFIQTVQAESEVRIVIDEGVDSARPIAIIPFKWNGSDSMPIDVADIISADLRNSGKFNPIAVSKMPQKPTSASEVISDVWSSLGIDAVVVGQVTPNEKGYSIAYQLVDTIGASGNAGEVLSQNQYAVPKNAIRLGAHTISDEVFEKLTAIRGAFRTKIAYVVQKHGGSKPYQVRVADYDGHNQFIVYSSSQPLMSPAWSPDGSKLAYVSFENRKSQLIVHDLQSGARRVIAAFPGHNGAPAFSPDGSKIAFASSKDGVLNIYVMNLGNGTISQLTSGAGNNTEPSWSPDGQSIIFTSDRAGGPQIYQMDVFGNGISLVSAGRGYSGKISADGSILVMIYGDNIVKKDLATGVTEMLSSTFLDESPSISPNGIMIIYSSTQGLGKVLQLVSADGRFKARLPSSDGQIKFPAWSPYLNKN.

Residues 1–24 (MKFSAYLTTLFIVLFSLFIQTVQA) form the signal peptide.

Belongs to the TolB family. In terms of assembly, the Tol-Pal system is composed of five core proteins: the inner membrane proteins TolA, TolQ and TolR, the periplasmic protein TolB and the outer membrane protein Pal. They form a network linking the inner and outer membranes and the peptidoglycan layer.

The protein localises to the periplasm. Part of the Tol-Pal system, which plays a role in outer membrane invagination during cell division and is important for maintaining outer membrane integrity. The chain is Tol-Pal system protein TolB from Histophilus somni (strain 129Pt) (Haemophilus somnus).